We begin with the raw amino-acid sequence, 457 residues long: Bifunctional protein GlmU (457 aa).

A pyrophosphorylase region spans residues 1 to 229 (MYNCAIILAA…YEEIMGVNSR (229 aa)). UDP-N-acetyl-alpha-D-glucosamine is bound by residues 8 to 11 (LAAG), Lys-22, Gln-73, and 78 to 79 (GT). Asp-103 is a binding site for Mg(2+). Residues Gly-140, Glu-155, Asn-170, and Asn-227 each contribute to the UDP-N-acetyl-alpha-D-glucosamine site. Asn-227 lines the Mg(2+) pocket. A linker region spans residues 230 to 250 (VQLSEAEIVMRKRINHKHMVN). The N-acetyltransferase stretch occupies residues 251-457 (GVTFIDCEST…WLDKKGLLKK (207 aa)). UDP-N-acetyl-alpha-D-glucosamine is bound by residues Arg-332 and Lys-350. The Proton acceptor role is filled by His-362. Tyr-365 and Asn-376 together coordinate UDP-N-acetyl-alpha-D-glucosamine. Residues 385 to 386 (NY), Ala-422, and Arg-439 contribute to the acetyl-CoA site.

This sequence in the N-terminal section; belongs to the N-acetylglucosamine-1-phosphate uridyltransferase family. In the C-terminal section; belongs to the transferase hexapeptide repeat family. As to quaternary structure, homotrimer. Mg(2+) serves as cofactor.

Its subcellular location is the cytoplasm. The enzyme catalyses alpha-D-glucosamine 1-phosphate + acetyl-CoA = N-acetyl-alpha-D-glucosamine 1-phosphate + CoA + H(+). The catalysed reaction is N-acetyl-alpha-D-glucosamine 1-phosphate + UTP + H(+) = UDP-N-acetyl-alpha-D-glucosamine + diphosphate. Its pathway is nucleotide-sugar biosynthesis; UDP-N-acetyl-alpha-D-glucosamine biosynthesis; N-acetyl-alpha-D-glucosamine 1-phosphate from alpha-D-glucosamine 6-phosphate (route II): step 2/2. It participates in nucleotide-sugar biosynthesis; UDP-N-acetyl-alpha-D-glucosamine biosynthesis; UDP-N-acetyl-alpha-D-glucosamine from N-acetyl-alpha-D-glucosamine 1-phosphate: step 1/1. It functions in the pathway bacterial outer membrane biogenesis; LPS lipid A biosynthesis. Its function is as follows. Catalyzes the last two sequential reactions in the de novo biosynthetic pathway for UDP-N-acetylglucosamine (UDP-GlcNAc). The C-terminal domain catalyzes the transfer of acetyl group from acetyl coenzyme A to glucosamine-1-phosphate (GlcN-1-P) to produce N-acetylglucosamine-1-phosphate (GlcNAc-1-P), which is converted into UDP-GlcNAc by the transfer of uridine 5-monophosphate (from uridine 5-triphosphate), a reaction catalyzed by the N-terminal domain. The polypeptide is Bifunctional protein GlmU (Clostridium botulinum (strain 657 / Type Ba4)).